The primary structure comprises 394 residues: Ornithine aminotransferase 1 (394 aa).

Residue K252 is modified to N6-(pyridoxal phosphate)lysine.

Belongs to the class-III pyridoxal-phosphate-dependent aminotransferase family. OAT subfamily. Pyridoxal 5'-phosphate serves as cofactor.

Its subcellular location is the cytoplasm. It carries out the reaction a 2-oxocarboxylate + L-ornithine = L-glutamate 5-semialdehyde + an L-alpha-amino acid. It functions in the pathway amino-acid biosynthesis; L-proline biosynthesis; L-glutamate 5-semialdehyde from L-ornithine: step 1/1. Catalyzes the interconversion of ornithine to glutamate semialdehyde. The chain is Ornithine aminotransferase 1 from Staphylococcus aureus (strain Mu50 / ATCC 700699).